Consider the following 660-residue polypeptide: Bifunctional polymyxin resistance protein ArnA (660 aa).

The formyltransferase ArnAFT stretch occupies residues 1 to 304 (MKAVIFAYHD…TLGLVAGACL (304 aa)). The active-site Proton donor; for formyltransferase activity is His104. Residues Arg114 and 136-140 (VKRAD) each bind (6R)-10-formyltetrahydrofolate. The dehydrogenase ArnADH stretch occupies residues 314–660 (RRIRVLILGV…RSVDIAERAS (347 aa)). NAD(+)-binding positions include Asp347 and 368–369 (DI). UDP-alpha-D-glucuronate-binding positions include Ala393, Tyr398, and 432-433 (TS). Glu434 acts as the Proton acceptor; for decarboxylase activity in catalysis. Residues Arg460, Asn492, 526 to 535 (KLIDGGQQKR), and Tyr613 each bind UDP-alpha-D-glucuronate. Residue Arg619 is the Proton donor; for decarboxylase activity of the active site.

This sequence in the N-terminal section; belongs to the Fmt family. UDP-L-Ara4N formyltransferase subfamily. It in the C-terminal section; belongs to the NAD(P)-dependent epimerase/dehydratase family. UDP-glucuronic acid decarboxylase subfamily. As to quaternary structure, homohexamer, formed by a dimer of trimers.

It catalyses the reaction UDP-alpha-D-glucuronate + NAD(+) = UDP-beta-L-threo-pentopyranos-4-ulose + CO2 + NADH. The catalysed reaction is UDP-4-amino-4-deoxy-beta-L-arabinose + (6R)-10-formyltetrahydrofolate = UDP-4-deoxy-4-formamido-beta-L-arabinose + (6S)-5,6,7,8-tetrahydrofolate + H(+). It participates in nucleotide-sugar biosynthesis; UDP-4-deoxy-4-formamido-beta-L-arabinose biosynthesis; UDP-4-deoxy-4-formamido-beta-L-arabinose from UDP-alpha-D-glucuronate: step 1/3. It functions in the pathway nucleotide-sugar biosynthesis; UDP-4-deoxy-4-formamido-beta-L-arabinose biosynthesis; UDP-4-deoxy-4-formamido-beta-L-arabinose from UDP-alpha-D-glucuronate: step 3/3. The protein operates within bacterial outer membrane biogenesis; lipopolysaccharide biosynthesis. Bifunctional enzyme that catalyzes the oxidative decarboxylation of UDP-glucuronic acid (UDP-GlcUA) to UDP-4-keto-arabinose (UDP-Ara4O) and the addition of a formyl group to UDP-4-amino-4-deoxy-L-arabinose (UDP-L-Ara4N) to form UDP-L-4-formamido-arabinose (UDP-L-Ara4FN). The modified arabinose is attached to lipid A and is required for resistance to polymyxin and cationic antimicrobial peptides. The sequence is that of Bifunctional polymyxin resistance protein ArnA from Salmonella paratyphi A (strain ATCC 9150 / SARB42).